Here is a 143-residue protein sequence, read N- to C-terminus: Sorting nexin-3 (143 aa).

The PX domain occupies Asn-23–Lys-140. Residues Arg-66, Ser-68, Lys-92, Arg-97, and Arg-106 each coordinate a 1,2-diacyl-sn-glycero-3-phospho-(1D-myo-inositol-3-phosphate).

The protein belongs to the sorting nexin family.

The protein resides in the cytoplasm. It localises to the golgi apparatus membrane. The protein localises to the prevacuolar compartment membrane. In terms of biological role, required for retention of late Golgi membrane proteins. Component of the retrieval machinery that functions by direct interaction with the cytosolic tails of certain TGN membrane proteins during the sorting/budding process at the prevacuolar compartment. Binds phosphatidylinositol 3-phosphate (PtdIns(P3)). The sequence is that of Sorting nexin-3 (snx3) from Schizosaccharomyces pombe (strain 972 / ATCC 24843) (Fission yeast).